The following is a 107-amino-acid chain: Anti-adapter protein IraM (107 aa).

Belongs to the IraM/RssC family.

The protein resides in the cytoplasm. Inhibits RpoS proteolysis by regulating RssB activity, thereby increasing the stability of the sigma stress factor RpoS during magnesium starvation. This chain is Anti-adapter protein IraM, found in Escherichia coli (strain 55989 / EAEC).